A 522-amino-acid polypeptide reads, in one-letter code: Na(+)/H(+) antiporter NhaB (522 aa).

11 helical membrane-spanning segments follow: residues 25–45 (VFLV…GWLL), 49–69 (FIFT…GMLA), 87–107 (ILAN…IYFM), 128–162 (LSLA…FYGV), 201–221 (LMMH…VGEP), 237–257 (FFFR…VTCI), 302–322 (VFVG…VGLI), 356–376 (LVVF…APVI), 388–408 (LLLF…VFVA), 446–466 (ATPN…SPLI), and 476–496 (MALP…EYVL).

The protein belongs to the NhaB Na(+)/H(+) (TC 2.A.34) antiporter family.

It localises to the cell inner membrane. It carries out the reaction 2 Na(+)(in) + 3 H(+)(out) = 2 Na(+)(out) + 3 H(+)(in). Functionally, na(+)/H(+) antiporter that extrudes sodium in exchange for external protons. The protein is Na(+)/H(+) antiporter NhaB of Actinobacillus succinogenes (strain ATCC 55618 / DSM 22257 / CCUG 43843 / 130Z).